A 438-amino-acid polypeptide reads, in one-letter code: Na(+)/H(+) antiporter NhaA (438 aa).

11 helical membrane passes run 23–43 (FGGIFLFLNAVLAMVVANSFV), 62–82 (FFIGFSLHNWIDDVLMALFFL), 104–124 (SFPVIAAIGGMIAPGLIYFFL), 133–153 (GFGIPMATDIAFALGVIMLLG), 162–182 (VFLITLAVADDLGAIMVIALF), 185–205 (TNLKFAWLLGALGVVLVLALL), 212–232 (SLIPYLLLGVLLWFCVHQSGI), 302–322 (FLAPISGYFIMPLFAFANAGV), 337–357 (LGVILGLCLGKPLGIFLITFI), 372–392 (WWHILGAGFLAGIGFTMSMFI), and 410–430 (IAILLGSLISGIIGALYLFLL).

Belongs to the NhaA Na(+)/H(+) (TC 2.A.33) antiporter family.

It is found in the cell inner membrane. It carries out the reaction Na(+)(in) + 2 H(+)(out) = Na(+)(out) + 2 H(+)(in). Na(+)/H(+) antiporter that extrudes sodium in exchange for external protons. This is Na(+)/H(+) antiporter NhaA from Helicobacter acinonychis (strain Sheeba).